The sequence spans 297 residues: Light-independent protochlorophyllide reductase iron-sulfur ATP-binding protein (297 aa).

ATP contacts are provided by residues 41–46 and Lys70; that span reads GIGKST. Ser45 contributes to the Mg(2+) binding site. Residues Cys126 and Cys160 each coordinate [4Fe-4S] cluster. Residues 211 to 212 and 235 to 237 each bind ATP; these read NR and PDL.

Belongs to the NifH/BchL/ChlL family. Homodimer. Protochlorophyllide reductase is composed of three subunits; BchL, BchN and BchB. It depends on [4Fe-4S] cluster as a cofactor.

The enzyme catalyses chlorophyllide a + oxidized 2[4Fe-4S]-[ferredoxin] + 2 ADP + 2 phosphate = protochlorophyllide a + reduced 2[4Fe-4S]-[ferredoxin] + 2 ATP + 2 H2O. Its pathway is porphyrin-containing compound metabolism; bacteriochlorophyll biosynthesis (light-independent). In terms of biological role, component of the dark-operative protochlorophyllide reductase (DPOR) that uses Mg-ATP and reduced ferredoxin to reduce ring D of protochlorophyllide (Pchlide) to form chlorophyllide a (Chlide). This reaction is light-independent. The L component serves as a unique electron donor to the NB-component of the complex, and binds Mg-ATP. This chain is Light-independent protochlorophyllide reductase iron-sulfur ATP-binding protein, found in Cereibacter sphaeroides (strain ATCC 17025 / ATH 2.4.3) (Rhodobacter sphaeroides).